Consider the following 313-residue polypeptide: MTLQQIKEIYSRPLTELILQALEIHNKNFGNDIELCSLKSIKTGTCPEDCKYCPQSGHYNTSIEKHKLLDKDSILAEAKNAKDAGSKRFCMGAAWKHIPKKDFDQVAEIITEVKNLGLETCVTLGSINADEATKLKQAGLDYYNHNLDTSREFYPEIITTRKFEERIETIRNVANADINVCCGGILGMGESLDDRFNLLLELLQLPAAPKSIPINTLIPIKGTPLGDKYTNAQIDSFELVRFIATTRILFPQARLRLSAGRENMSLETQTLCFLAGINSIFYGNKLLTENNATVNSDNFLLAKLGLKSNAELC.

The 231-residue stretch at 28–258 folds into the Radical SAM core domain; it reads NFGNDIELCS…LFPQARLRLS (231 aa). [4Fe-4S] cluster contacts are provided by Cys46, Cys50, and Cys53. [2Fe-2S] cluster is bound by residues Cys90, Cys121, Cys181, and Arg256.

This sequence belongs to the radical SAM superfamily. Biotin synthase family. Homodimer. [4Fe-4S] cluster is required as a cofactor. It depends on [2Fe-2S] cluster as a cofactor.

It catalyses the reaction (4R,5S)-dethiobiotin + (sulfur carrier)-SH + 2 reduced [2Fe-2S]-[ferredoxin] + 2 S-adenosyl-L-methionine = (sulfur carrier)-H + biotin + 2 5'-deoxyadenosine + 2 L-methionine + 2 oxidized [2Fe-2S]-[ferredoxin]. It functions in the pathway cofactor biosynthesis; biotin biosynthesis; biotin from 7,8-diaminononanoate: step 2/2. Its function is as follows. Catalyzes the conversion of dethiobiotin (DTB) to biotin by the insertion of a sulfur atom into dethiobiotin via a radical-based mechanism. This is Biotin synthase from Francisella tularensis subsp. tularensis (strain FSC 198).